The following is a 207-amino-acid chain: MIGRIRGVILEKQPPVVLIEAGNGVGYEINMPMTCFYELPDIGQEAIIYTQFIVREDAQLLYGFNQKQERALFRELIKVNGVGPKLALAILSGMSARQFVTAIENESISSLVKLPGVGKKTAERLVVEMKDRFKGLNGDLFEQNGDIELPASASSKAPSAADIEAEASAALIALGYKPQEAAKMISRVATAGADSETLIKEALRAAI.

A domain I region spans residues 1–65; sequence MIGRIRGVIL…EDAQLLYGFN (65 aa). Residues 66-143 are domain II; that stretch reads QKQERALFRE…KGLNGDLFEQ (78 aa). The segment at 144–158 is flexible linker; sequence NGDIELPASASSKAP. Positions 159–207 are domain III; that stretch reads SAADIEAEASAALIALGYKPQEAAKMISRVATAGADSETLIKEALRAAI.

The protein belongs to the RuvA family. Homotetramer. Forms an RuvA(8)-RuvB(12)-Holliday junction (HJ) complex. HJ DNA is sandwiched between 2 RuvA tetramers; dsDNA enters through RuvA and exits via RuvB. An RuvB hexamer assembles on each DNA strand where it exits the tetramer. Each RuvB hexamer is contacted by two RuvA subunits (via domain III) on 2 adjacent RuvB subunits; this complex drives branch migration. In the full resolvosome a probable DNA-RuvA(4)-RuvB(12)-RuvC(2) complex forms which resolves the HJ.

The protein localises to the cytoplasm. Its function is as follows. The RuvA-RuvB-RuvC complex processes Holliday junction (HJ) DNA during genetic recombination and DNA repair, while the RuvA-RuvB complex plays an important role in the rescue of blocked DNA replication forks via replication fork reversal (RFR). RuvA specifically binds to HJ cruciform DNA, conferring on it an open structure. The RuvB hexamer acts as an ATP-dependent pump, pulling dsDNA into and through the RuvAB complex. HJ branch migration allows RuvC to scan DNA until it finds its consensus sequence, where it cleaves and resolves the cruciform DNA. In Proteus mirabilis (strain HI4320), this protein is Holliday junction branch migration complex subunit RuvA.